The sequence spans 462 residues: Argininosuccinate lyase (462 aa).

It belongs to the lyase 1 family. Argininosuccinate lyase subfamily.

Its subcellular location is the cytoplasm. The catalysed reaction is 2-(N(omega)-L-arginino)succinate = fumarate + L-arginine. It participates in amino-acid biosynthesis; L-arginine biosynthesis; L-arginine from L-ornithine and carbamoyl phosphate: step 3/3. This Lachnoclostridium phytofermentans (strain ATCC 700394 / DSM 18823 / ISDg) (Clostridium phytofermentans) protein is Argininosuccinate lyase.